The primary structure comprises 361 residues: GDP-mannose 4,6 dehydratase 1 (361 aa).

NADP(+) is bound by residues 23–28 (GITGQD), 79–80 (DL), 101–105 (LAAQS), and tyrosine 116. The active site involves serine 150. Active-site nucleophile residues include glutamate 152 and tyrosine 173. NADP(+) contacts are provided by lysine 177, histidine 203, and arginine 208.

The protein belongs to the NAD(P)-dependent epimerase/dehydratase family. GDP-mannose 4,6-dehydratase subfamily. As to quaternary structure, homotetramer. NADP(+) serves as cofactor. In terms of tissue distribution, expressed in roots,stipules and pollen just before anthesis. Primarily localized to the root meristem and columella root cap. Not expressed in emerging lateral roots.

The enzyme catalyses GDP-alpha-D-mannose = GDP-4-dehydro-alpha-D-rhamnose + H2O. The protein operates within nucleotide-sugar biosynthesis; GDP-L-fucose biosynthesis via de novo pathway; GDP-L-fucose from GDP-alpha-D-mannose: step 1/2. Functionally, catalyzes the conversion of GDP-D-mannose to GDP-4-dehydro-6-deoxy-D-mannose. This is GDP-mannose 4,6 dehydratase 1 (GMD1) from Arabidopsis thaliana (Mouse-ear cress).